Reading from the N-terminus, the 374-residue chain is Phosphate-binding protein PstS1 (374 aa).

A signal peptide spans 1–23 (MKIRLHTLLAVLTAAPLLLAAAG). Residue cysteine 24 is the site of N-palmitoyl cysteine attachment. Cysteine 24 carries the S-diacylglycerol cysteine lipid modification. The disordered stretch occupies residues 25–48 (GSKPPSGSPETGAGAGTVATTPAS). Phosphate is bound by residues 58–60 (STL), serine 88, aspartate 106, and 189–191 (SGD).

It belongs to the PstS family. The complex is composed of two ATP-binding proteins (PstB), two transmembrane proteins (PstC and PstA) and a solute-binding protein (PstS).

The protein localises to the cell membrane. The protein resides in the secreted. In terms of biological role, functions in inorganic phosphate uptake, a phosphate-binding protein, although probably not the main uptake protein under phosphate starvation. Part of the ABC transporter complex PstSACB involved in phosphate import. Functionally, a host TLR2 agonist (toll-like receptor), requires both host TLR1 and TLR2 as coreceptors. The polypeptide is Phosphate-binding protein PstS1 (pstS1) (Mycobacterium bovis (strain BCG / Pasteur 1173P2)).